The following is a 538-amino-acid chain: MRVNNLTPQDLKAYGINDVQDIVYNPSYDTLYQEELNPGLEGYERGVLTNLGAVAVDTGIFTGRSPKDKYIVRDDTTRDTLWWSDKGKGKNDNKPLSQETWQHLKGLVTHQLSGKRLFIVDAFCGANADTRLSVRFITEVAWQAHFVKNMFIRPTDEELVGFKPDFIVMNGAKCTNPQWKEQGLNSENFVAFNLTERIQLIGGTWYGGEMKKGMFSVMNYLLPLKGIASMHCSANVGEKGDVAVFFGLSGTGKTTLSTDPKRRLIGDDEHGWDDDGVFNFEGGCYAKTIKLSKEAEPEIYHAIRRDALLENVTVREDGTVDFDDGSKTENTRVSYPIYHIDNIVKPVSKAGHATKVIFLTADFGVLPPVSRLTANQTQYHFLSGFTAKLAGTERGVTEPTPTFSACFGAAFLTLHPTQYAEVLVKRMQAAGAQAYLVNTGWNGTGKRISIKDTRAIIDAILNGSLDNAETFRLPLFDLAIPTELPGVDTHILDPRNTYASPEQWQEKATALAKLFIENFEKYTDTPAGEALVSAGPKL.

Arg64 serves as a coordination point for substrate. The Ca(2+) site is built by Asn149 and Phe151. Tyr206 and Lys212 together coordinate substrate. Residues Lys212, His231, and 247–255 (GLSGTGKTT) contribute to the ATP site. Mn(2+)-binding residues include Lys212 and His231. Asp268 is a binding site for Mn(2+). ATP-binding positions include Glu296, Arg332, 447 to 448 (RI), and Thr453. Substrate is bound at residue Arg332.

The protein belongs to the phosphoenolpyruvate carboxykinase (ATP) family. Monomer. The cofactor is Mn(2+).

It is found in the cytoplasm. It catalyses the reaction oxaloacetate + ATP = phosphoenolpyruvate + ADP + CO2. It functions in the pathway carbohydrate biosynthesis; gluconeogenesis. Its activity is regulated as follows. Allosterically activated by calcium. Involved in the gluconeogenesis. Catalyzes the conversion of oxaloacetate (OAA) to phosphoenolpyruvate (PEP) through direct phosphoryl transfer between the nucleoside triphosphate and OAA. This Salmonella typhimurium (strain LT2 / SGSC1412 / ATCC 700720) protein is Phosphoenolpyruvate carboxykinase (ATP).